The primary structure comprises 72 residues: Translation initiation factor IF-1 (72 aa).

Residues 1-72 (MAKEELLEMR…TKGRITYRFK (72 aa)) form the S1-like domain.

Belongs to the IF-1 family. Component of the 30S ribosomal translation pre-initiation complex which assembles on the 30S ribosome in the order IF-2 and IF-3, IF-1 and N-formylmethionyl-tRNA(fMet); mRNA recruitment can occur at any time during PIC assembly.

It localises to the cytoplasm. One of the essential components for the initiation of protein synthesis. Stabilizes the binding of IF-2 and IF-3 on the 30S subunit to which N-formylmethionyl-tRNA(fMet) subsequently binds. Helps modulate mRNA selection, yielding the 30S pre-initiation complex (PIC). Upon addition of the 50S ribosomal subunit IF-1, IF-2 and IF-3 are released leaving the mature 70S translation initiation complex. This Sphingopyxis alaskensis (strain DSM 13593 / LMG 18877 / RB2256) (Sphingomonas alaskensis) protein is Translation initiation factor IF-1.